Here is a 23-residue protein sequence, read N- to C-terminus: ACGSCRKKCKGPGKCINGRCKCY.

3 disulfides stabilise this stretch: Cys2–Cys15, Cys5–Cys20, and Cys9–Cys22. Residues 13-20 form an interaction with Ca(2+)-activated K(+) channels region; it reads GKCINGRC. Tyr23 is subject to Tyrosine amide.

As to expression, expressed by the venom gland.

The protein localises to the secreted. In terms of biological role, reversibly blocks Shaker B potassium channels, with a dissociation constant of 200 nM. In Tityus pachyurus (Colombian scorpion), this protein is Potassium channel toxin alpha-KTx 13.3.